Here is a 404-residue protein sequence, read N- to C-terminus: Pectate lyase E (404 aa).

The first 41 residues, 1 to 41 (MNNSRMSSVSTQKTTGRSALGTKSALAAIIATTMMVSVASA), serve as a signal peptide directing secretion. Residues D182 and D225 each coordinate Ca(2+). The active site involves R278.

It belongs to the polysaccharide lyase 1 family. PLBC subfamily. Ca(2+) is required as a cofactor.

It localises to the secreted. The enzyme catalyses Eliminative cleavage of (1-&gt;4)-alpha-D-galacturonan to give oligosaccharides with 4-deoxy-alpha-D-galact-4-enuronosyl groups at their non-reducing ends.. It participates in glycan metabolism; pectin degradation; 2-dehydro-3-deoxy-D-gluconate from pectin: step 2/5. Its function is as follows. Involved in maceration and soft-rotting of plant tissue. Pectate lyases have been implicated as pathogenicity factors which induce maceration or rotting of plant tissue. PelE is sufficient to induce these effects under laboratory conditions. The protein is Pectate lyase E (pelE) of Dickeya chrysanthemi (Pectobacterium chrysanthemi).